We begin with the raw amino-acid sequence, 207 residues long: Large ribosomal subunit protein uL4 (207 aa).

The tract at residues 48-89 (THKVKNRSEVSGGGRKPWRQKGTGRARQGSIRSPQWRGGGTV) is disordered.

Belongs to the universal ribosomal protein uL4 family. In terms of assembly, part of the 50S ribosomal subunit.

Functionally, one of the primary rRNA binding proteins, this protein initially binds near the 5'-end of the 23S rRNA. It is important during the early stages of 50S assembly. It makes multiple contacts with different domains of the 23S rRNA in the assembled 50S subunit and ribosome. Forms part of the polypeptide exit tunnel. The protein is Large ribosomal subunit protein uL4 of Bacillus cytotoxicus (strain DSM 22905 / CIP 110041 / 391-98 / NVH 391-98).